The chain runs to 122 residues: uncharacterized protein (122 aa).

A run of 4 helical transmembrane segments spans residues 7-27 (IVAIVTSIAVICISLTVIFCD), 29-49 (LVLAVGVPTLVLLWLVFLGWI), 62-82 (AITGSIVIAFFIILIAISKNP), and 89-109 (KEIFSLFFGMVTTIIGYYFGY).

The protein resides in the cell membrane. This is an uncharacterized protein from Methanocaldococcus jannaschii (strain ATCC 43067 / DSM 2661 / JAL-1 / JCM 10045 / NBRC 100440) (Methanococcus jannaschii).